The primary structure comprises 201 residues: Potassium-transporting ATPase KdpC subunit (201 aa).

Residues Ile-9–Val-29 form a helical membrane-spanning segment. Polar residues-rich tracts occupy residues Thr-73–Thr-84 and Ala-91–Pro-101. The interval Thr-73 to Ser-103 is disordered.

It belongs to the KdpC family. As to quaternary structure, the system is composed of three essential subunits: KdpA, KdpB and KdpC.

It localises to the cell inner membrane. Its function is as follows. Part of the high-affinity ATP-driven potassium transport (or Kdp) system, which catalyzes the hydrolysis of ATP coupled with the electrogenic transport of potassium into the cytoplasm. This subunit acts as a catalytic chaperone that increases the ATP-binding affinity of the ATP-hydrolyzing subunit KdpB by the formation of a transient KdpB/KdpC/ATP ternary complex. The protein is Potassium-transporting ATPase KdpC subunit of Bradyrhizobium sp. (strain BTAi1 / ATCC BAA-1182).